The sequence spans 121 residues: uncharacterized protein (121 aa).

Disordered regions lie at residues 1–41 (MRRQ…QESR) and 94–121 (GGTI…GLRR). Positions 98-108 (SGQQSRNSSLP) are enriched in polar residues.

Predominantly expressed in tissues containing motile cilia. Also expressed in non-motile ciliated adult olfactory bulbs.

The protein localises to the cytoplasm. It localises to the cytoskeleton. The protein resides in the cilium basal body. This is an uncharacterized protein from Mus musculus (Mouse).